Here is a 266-residue protein sequence, read N- to C-terminus: Basic endochitinase C (266 aa).

A signal peptide spans Met1–Gly23. Cystine bridges form between Cys46/Cys108, Cys120/Cys128, and Cys246/Cys259. Glu90 (proton donor) is an active-site residue.

The protein belongs to the glycosyl hydrolase 19 family. Chitinase class II subfamily. In terms of tissue distribution, localized to the starchy endoderm of the seed May localize to other parts of the seed including the aleurone cells (at protein level).

The enzyme catalyses Random endo-hydrolysis of N-acetyl-beta-D-glucosaminide (1-&gt;4)-beta-linkages in chitin and chitodextrins.. Defense against chitin-containing fungal pathogens. Binds the hyphal tips of fungi and degrades nascent chitin. This chain is Basic endochitinase C, found in Secale cereale (Rye).